The primary structure comprises 649 residues: MSHIIELPEMLANQIAAGEVIERPASVVKELVENAIDAGSSQIIIEIEEAGLKKVQITDNGHGIAHDEVELALRRHATSKIKNQADLFRIRTLGFRGEALPSIASVSVLTLLTAVDGASHGTKLVARGGEVEEVIPATSPVGTKVCVEDLFFNTPARLKYMKSQQAELSHIIDIVNRLGLAHPEISFSLISDGKEMTRTAGTGQLRQAIAGIYGLVSAKKMIEIENSDLDFEISGFVSLPELTRANRNYISLFINGRYIKNFLLNRAILDGFGSKLMVGRFPLAVIHIHIDPYLADVNVHPTKQEVRISKEKELMTLVSEAIANSLKEQTLIPDALENLAKSTVRNREKVEQTILPLKENTLYYEKTEPSRPSQTEVADYQVELTDEGQDLTLFAKETLDRLTKPAKLHFAERKPANYDQLDHPELDLASIDKAYDKLEREEASSFPELEFFGQMHGTYLFAQGRDGLYIIDQHAAQERVKYEEYRESIGNVDQSQQQLLVPYIFEFPADDALRLKERMPLLEEVGVFLAEYGENQFILREHPIWMAEEEIESGIYEMCDMLLLTKEVSIKKYRAELAIMMSCKRSIKANHRIDDHSARQLLYQLSQCDNPYNCPHGRPVLVHFTKSDMEKMFRRIQENHTSLRELGKY.

It belongs to the DNA mismatch repair MutL/HexB family.

In terms of biological role, this protein is involved in the repair of mismatches in DNA. It is required for dam-dependent methyl-directed DNA mismatch repair. May act as a 'molecular matchmaker', a protein that promotes the formation of a stable complex between two or more DNA-binding proteins in an ATP-dependent manner without itself being part of a final effector complex. This chain is DNA mismatch repair protein MutL, found in Streptococcus pneumoniae serotype 2 (strain D39 / NCTC 7466).